Reading from the N-terminus, the 328-residue chain is Delta-aminolevulinic acid dehydratase (328 aa).

Lys-200 acts as the Schiff-base intermediate with substrate in catalysis. 5-aminolevulinate contacts are provided by Arg-210 and Lys-222. Glu-238 serves as a coordination point for Mg(2+). The active-site Schiff-base intermediate with substrate is the Lys-253. Residues Ser-279 and Tyr-318 each contribute to the 5-aminolevulinate site.

It belongs to the ALAD family. In terms of assembly, homooctamer.

It carries out the reaction 2 5-aminolevulinate = porphobilinogen + 2 H2O + H(+). Its pathway is porphyrin-containing compound metabolism; protoporphyrin-IX biosynthesis; coproporphyrinogen-III from 5-aminolevulinate: step 1/4. Stimulated by magnesium, inhibited by zinc. Its function is as follows. Catalyzes an early step in the biosynthesis of tetrapyrroles. Binds two molecules of 5-aminolevulinate per subunit, each at a distinct site, and catalyzes their condensation to form porphobilinogen. In Chlorobaculum tepidum (strain ATCC 49652 / DSM 12025 / NBRC 103806 / TLS) (Chlorobium tepidum), this protein is Delta-aminolevulinic acid dehydratase (hemB).